The following is a 217-amino-acid chain: MKSLRWRYTRLPSQVEDALSGEEDKEEEEEKEEETTPAPTPVPEHPMVPQLAGASQVLGASEMSQLSLHLPPRVTGYSWSLAFCTSRDGFSLQSLYRQMEGHSGPVLLVLRDQDGQMFGAFSSSALRLSKGFYGTGETFLFSFSPQLKVFKWTGSNSFFVKGDLDSLMMGCGSGRFGLWLDGDLYRGGSHPCATFNNEVLARQEQFCISELEAWVLS.

Positions Met-1 to Val-48 are disordered. Acidic residues predominate over residues Leu-19 to Thr-35. The TLDc domain maps to Gln-56–Ser-217.

This sequence belongs to the OXR1 family.

The polypeptide is TLD domain-containing protein 2 (TLDC2) (Bos taurus (Bovine)).